A 668-amino-acid polypeptide reads, in one-letter code: Fructose-1,6-bisphosphatase class 3 (668 aa).

It belongs to the FBPase class 3 family. It depends on Mn(2+) as a cofactor.

The enzyme catalyses beta-D-fructose 1,6-bisphosphate + H2O = beta-D-fructose 6-phosphate + phosphate. Its pathway is carbohydrate biosynthesis; gluconeogenesis. The protein is Fructose-1,6-bisphosphatase class 3 of Clostridium botulinum (strain Okra / Type B1).